The sequence spans 649 residues: Phospholipase A1 PLIP1, chloroplastic (649 aa).

The transit peptide at M1 to R67 directs the protein to the chloroplast. The GXSXG signature appears at G420–G424. Residue S422 is the Acyl-ester intermediate of the active site. Catalysis depends on charge relay system residues D483 and H593.

Belongs to the AB hydrolase superfamily. Lipase family.

It localises to the plastid. The protein resides in the chloroplast thylakoid membrane. It catalyses the reaction a 1,2-diacyl-sn-glycero-3-phosphocholine + H2O = a 2-acyl-sn-glycero-3-phosphocholine + a fatty acid + H(+). The enzyme catalyses a 1,2-diacyl-3-O-(beta-D-galactosyl)-sn-glycerol + 2 H2O = 3-beta-D-galactosyl-sn-glycerol + 2 a fatty acid + 2 H(+). Its function is as follows. Sn-1-specific phospholipase A1 involved in seed oil biosynthesis. Hydrolyzes polyunsaturated acyl groups from a unique chloroplast-specific phosphatidylglycerol (PG) that contains 16:1 delta 3-trans as its second acyl group. The polyunsaturated acyl groups released by PLIP1 are exported from the chloroplast, reincorporated into phosphatidylcholine (PC), and ultimately enter seed triacylglycerol (TAG). In vitro, possesses broad substrate specificity. Can hydrolyze the galactolipid monogalactosyldiacylglycerol (MGDG), and the phoshpolipids phosphatidylcholine (PC), phosphatidylethanolamine (PE), phosphatidic acid (PA), phosphatidylserine (PS) phosphatidylglycerol (PG) and phosphatidylinositol (PI). The chain is Phospholipase A1 PLIP1, chloroplastic from Arabidopsis thaliana (Mouse-ear cress).